The sequence spans 476 residues: tRNA(Ile)-lysidine synthase (476 aa).

30-35 (SGGPDS) is a binding site for ATP.

It belongs to the tRNA(Ile)-lysidine synthase family.

It localises to the cytoplasm. The enzyme catalyses cytidine(34) in tRNA(Ile2) + L-lysine + ATP = lysidine(34) in tRNA(Ile2) + AMP + diphosphate + H(+). Its function is as follows. Ligates lysine onto the cytidine present at position 34 of the AUA codon-specific tRNA(Ile) that contains the anticodon CAU, in an ATP-dependent manner. Cytidine is converted to lysidine, thus changing the amino acid specificity of the tRNA from methionine to isoleucine. The chain is tRNA(Ile)-lysidine synthase from Bacillus cereus (strain ATCC 10987 / NRS 248).